Reading from the N-terminus, the 189-residue chain is Putative OVARIAN TUMOR DOMAIN-containing deubiquitinating enzyme 8 (189 aa).

Residues 1–103 (MMKSDGNCQF…GIHFNSIYKK (103 aa)) form the OTU domain. Aspartate 5 is a catalytic residue. Catalysis depends on cysteine 8, which acts as the Nucleophile. Histidine 96 is an active-site residue. The disordered stretch occupies residues 105-189 (KEKGSRSSSS…NRNHHFHYSE (85 aa)). Residues 120–181 (WMKLQRKKEN…KKEKKEKKNR (62 aa)) are a coiled coil. 2 consecutive short sequence motifs (nuclear localization signal) follow at residues 125 to 132 (RKKENEAK) and 163 to 170 (KKKAKVQK). The segment covering 126–174 (KKENEAKKKEEEEKERKDMEKEEKKKDKEDKKKDKEDKKKAKVQKEKKE) has biased composition (basic and acidic residues). The segment covering 175–189 (KKEKKNRNHHFHYSE) has biased composition (basic residues).

Belongs to the peptidase C85 family.

The protein localises to the nucleus. The catalysed reaction is Thiol-dependent hydrolysis of ester, thioester, amide, peptide and isopeptide bonds formed by the C-terminal Gly of ubiquitin (a 76-residue protein attached to proteins as an intracellular targeting signal).. Hydrolase that can remove conjugated ubiquitin from proteins in vitro and may therefore play an important regulatory role at the level of protein turnover by preventing degradation. This is Putative OVARIAN TUMOR DOMAIN-containing deubiquitinating enzyme 8 from Arabidopsis thaliana (Mouse-ear cress).